We begin with the raw amino-acid sequence, 364 residues long: MQERHTEQDYRALLIADTPIIDVRAPIEFEQGAMPAAINLPLMNNDERAAVGTCYKQQGSDAALALGHKLVAGEIRQQRMDAWRAACLQNPQGILCCARGGQRSHIVQSWLYAAGIDYPLVEGGYKALRQTAIQATIELAQKPIVLIGGCTGSGKTLLVQQQPNGVDLEGLARHRGSAFGRTLQPQLSQASFENLLAAEMLKTDARQNLRLWVLEDESRMIGSNHLPECLRERMTQAAIAVVEDPFEIRLERLNEEYFLRMHHDFTHAYGDEQGWQEYCEYLHHGLSAIKRRLGLQRYNELAAQLDTALTTQLTTGSTDGHLAWLVPLLKEYYDPMYRYQLEKKAEKVVFRGEWAEVAEWVKAR.

The region spanning leucine 14 to isoleucine 137 is the Rhodanese domain. The active-site S-selanylcysteine intermediate is cysteine 97.

This sequence belongs to the SelU family. As to quaternary structure, monomer.

The catalysed reaction is 5-methylaminomethyl-2-thiouridine(34) in tRNA + selenophosphate + (2E)-geranyl diphosphate + H2O + H(+) = 5-methylaminomethyl-2-selenouridine(34) in tRNA + (2E)-thiogeraniol + phosphate + diphosphate. The enzyme catalyses 5-methylaminomethyl-2-thiouridine(34) in tRNA + (2E)-geranyl diphosphate = 5-methylaminomethyl-S-(2E)-geranyl-thiouridine(34) in tRNA + diphosphate. It catalyses the reaction 5-methylaminomethyl-S-(2E)-geranyl-thiouridine(34) in tRNA + selenophosphate + H(+) = 5-methylaminomethyl-2-(Se-phospho)selenouridine(34) in tRNA + (2E)-thiogeraniol. It carries out the reaction 5-methylaminomethyl-2-(Se-phospho)selenouridine(34) in tRNA + H2O = 5-methylaminomethyl-2-selenouridine(34) in tRNA + phosphate. Functionally, involved in the post-transcriptional modification of the uridine at the wobble position (U34) of tRNA(Lys), tRNA(Glu) and tRNA(Gln). Catalyzes the conversion of 2-thiouridine (S2U-RNA) to 2-selenouridine (Se2U-RNA). Acts in a two-step process involving geranylation of 2-thiouridine (S2U) to S-geranyl-2-thiouridine (geS2U) and subsequent selenation of the latter derivative to 2-selenouridine (Se2U) in the tRNA chain. The polypeptide is tRNA 2-selenouridine synthase (Escherichia coli (strain SE11)).